The following is a 112-amino-acid chain: MTILKTTILFVLAAVAEIGGAWLIWQAVREGKAWWWAGLGVVALGIYGFFAAFQPDAHFGRVLAAYGGVFIAGSLGWGMLMDGFRPDRWDVIGAAICIVGVGVIMFAPRPGG.

The next 4 helical transmembrane spans lie at Ile-8–Val-28, Ala-33–Phe-53, Val-62–Asp-82, and Val-91–Gly-111.

The protein belongs to the UPF0060 family.

It is found in the cell membrane. This Paenarthrobacter aurescens (strain TC1) protein is UPF0060 membrane protein AAur_4166.